Reading from the N-terminus, the 298-residue chain is Enoyl-CoA hydratase ACTT6 (298 aa).

It belongs to the enoyl-CoA hydratase/isomerase family.

It functions in the pathway mycotoxin biosynthesis. Functionally, enoyl-CoA hydratase; part of the gene clusters that mediate the biosynthesis of the host-selective toxins (HSTs) ACT-toxins responsible for brown spot of tangerine disease by the tangerine pathotype which affects tangerines and mandarins. ACT-toxins consist of three moieties, 9,10-epoxy-8-hydroxy-9-methyl-decatrienoic acid (EDA), valine and a polyketide. ACT-toxin I is toxic to both citrus and pear; toxin II the 5''-deoxy derivative of ACT-toxin I, is highly toxic to pear and slightly toxic to citrus. On cellular level, ACT-toxins affect plasma membrane of susceptible cells and cause a sudden increase in loss of K(+) after a few minutes of toxin treatment. The acyl-CoA ligase ACTT1, the hydrolase ACTT2, the enoyl-CoA hydratases ACTT3 and ACTT6, and the acyl-CoA synthetase ACTT5 are all involved in the biosynthesis of the AK-, AF- and ACT-toxin common 9,10-epoxy-8-hydroxy-9-methyl-decatrienoic acid (EDA) structural moiety. The exact role of each enzyme, and of additional enzymes identified within the AF-toxin clusters have still to be determined. On the other hand, ACTTS1 to ACTTS4 are specific to the tangerine pathotype. The function of ACTTS3 is to elongate the polyketide chain portion of ACT-toxin that is unique to this toxin. The enoyl-reductase ACTTS2 might complement the missing enoyl-reductase (ER) domain in ACTTS3 in the synthesis of the polyketide portion of ACT-toxin. The roles of the nonribosomal peptide synthetases-related proteins ACTTS1 and ACTTS4 have also still not been elucidated. In Alternaria alternata (Alternaria rot fungus), this protein is Enoyl-CoA hydratase ACTT6.